Here is a 279-residue protein sequence, read N- to C-terminus: Urease accessory protein UreD (279 aa).

Belongs to the UreD family. In terms of assembly, ureD, UreF and UreG form a complex that acts as a GTP-hydrolysis-dependent molecular chaperone, activating the urease apoprotein by helping to assemble the nickel containing metallocenter of UreC. The UreE protein probably delivers the nickel.

It is found in the cytoplasm. Its function is as follows. Required for maturation of urease via the functional incorporation of the urease nickel metallocenter. This chain is Urease accessory protein UreD, found in Trichormus variabilis (strain ATCC 29413 / PCC 7937) (Anabaena variabilis).